The sequence spans 254 residues: 5-oxoprolinase subunit A 1 (254 aa).

This sequence belongs to the LamB/PxpA family. In terms of assembly, forms a complex composed of PxpA, PxpB and PxpC.

It carries out the reaction 5-oxo-L-proline + ATP + 2 H2O = L-glutamate + ADP + phosphate + H(+). In terms of biological role, catalyzes the cleavage of 5-oxoproline to form L-glutamate coupled to the hydrolysis of ATP to ADP and inorganic phosphate. The protein is 5-oxoprolinase subunit A 1 of Burkholderia pseudomallei (strain K96243).